Reading from the N-terminus, the 185-residue chain is UPF0200 protein Mevan_0592 (185 aa).

G8–S15 contributes to the ATP binding site.

Belongs to the UPF0200 family.

The polypeptide is UPF0200 protein Mevan_0592 (Methanococcus vannielii (strain ATCC 35089 / DSM 1224 / JCM 13029 / OCM 148 / SB)).